The following is a 510-amino-acid chain: NAD(P)H-quinone oxidoreductase subunit 2 B, chloroplastic (510 aa).

The next 13 helical transmembrane spans lie at 24–44, 59–79, 99–119, 124–144, 149–169, 184–204, 229–249, 262–284, 295–315, 323–343, 354–374, 395–415, and 418–438; these read LLLF…GLIL, WFYF…LFRW, IFQF…VEYI, MAIT…MFLC, LITI…LSGY, LLMG…LYGL, ISIA…LAPF, TPVV…TRIF, WHLL…LIAI, MLAY…IVGD, YMLF…LFGL, ALSL…AGFF, and LHLF…IGLL.

It belongs to the complex I subunit 2 family. NDH is composed of at least 16 different subunits, 5 of which are encoded in the nucleus.

The protein resides in the plastid. It localises to the chloroplast thylakoid membrane. It catalyses the reaction a plastoquinone + NADH + (n+1) H(+)(in) = a plastoquinol + NAD(+) + n H(+)(out). The catalysed reaction is a plastoquinone + NADPH + (n+1) H(+)(in) = a plastoquinol + NADP(+) + n H(+)(out). In terms of biological role, NDH shuttles electrons from NAD(P)H:plastoquinone, via FMN and iron-sulfur (Fe-S) centers, to quinones in the photosynthetic chain and possibly in a chloroplast respiratory chain. The immediate electron acceptor for the enzyme in this species is believed to be plastoquinone. Couples the redox reaction to proton translocation, and thus conserves the redox energy in a proton gradient. This chain is NAD(P)H-quinone oxidoreductase subunit 2 B, chloroplastic, found in Lemna minor (Common duckweed).